A 343-amino-acid polypeptide reads, in one-letter code: Probable 3',5'-cyclic-nucleotide phosphodiesterase (343 aa).

The signal sequence occupies residues 1–36 (MKYLSIKSASDKIKSGLLKTGVILSFSLFSSLSTAA).

Belongs to the cyclic nucleotide phosphodiesterase class-II family.

It localises to the periplasm. The enzyme catalyses a nucleoside 3',5'-cyclic phosphate + H2O = a nucleoside 5'-phosphate + H(+). This Yersinia pestis protein is Probable 3',5'-cyclic-nucleotide phosphodiesterase (cpdP).